The chain runs to 519 residues: Xylose import ATP-binding protein XylG (519 aa).

2 consecutive ABC transporter domains span residues Leu6 to Glu245 and Leu262 to Ala507. Gly38–Ser45 contacts ATP.

The protein belongs to the ABC transporter superfamily. Xylose importer (TC 3.A.1.2.4) family. As to quaternary structure, the complex is composed of two ATP-binding proteins (XylG), two transmembrane proteins (XylH) and a solute-binding protein (XylF).

It localises to the cell inner membrane. The catalysed reaction is D-xylose(out) + ATP + H2O = D-xylose(in) + ADP + phosphate + H(+). Functionally, part of the ABC transporter complex XylFGH involved in xylose import. Responsible for energy coupling to the transport system. The protein is Xylose import ATP-binding protein XylG of Burkholderia ambifaria (strain ATCC BAA-244 / DSM 16087 / CCUG 44356 / LMG 19182 / AMMD) (Burkholderia cepacia (strain AMMD)).